A 279-amino-acid polypeptide reads, in one-letter code: Phenylalanine 3-hydroxylase (279 aa).

Fe cation is bound by residues His-140, His-145, and Glu-186.

This sequence belongs to the biopterin-dependent aromatic amino acid hydroxylase family. Fe(2+) serves as cofactor.

It catalyses the reaction (6R)-L-erythro-5,6,7,8-tetrahydrobiopterin + L-phenylalanine + O2 = 3-hydroxy-L-phenylalanine + (4aS,6R)-4a-hydroxy-L-erythro-5,6,7,8-tetrahydrobiopterin. Functionally, in vitro, catalyzes the highly regiospecific C-3 hydroxylation of L-phenylalanine (L-Phe) to yield 3-hydroxy-L-phenylalanine (meta-Tyr), an amino acid found in bacterial secondary metabolites such as sanglifehrin A and some pacidamycins. Tetrahydrobiopterin (BH4) seems to be the physiological pterin, however the hydroxylase is also able to use 6-methyltetrahydropterin (6-MePH4). The sequence is that of Phenylalanine 3-hydroxylase from Streptomyces coeruleorubidus.